We begin with the raw amino-acid sequence, 124 residues long: Small ribosomal subunit protein uS12 (124 aa).

Residue aspartate 89 is modified to 3-methylthioaspartic acid.

This sequence belongs to the universal ribosomal protein uS12 family. In terms of assembly, part of the 30S ribosomal subunit. Contacts proteins S8 and S17. May interact with IF1 in the 30S initiation complex.

With S4 and S5 plays an important role in translational accuracy. Its function is as follows. Interacts with and stabilizes bases of the 16S rRNA that are involved in tRNA selection in the A site and with the mRNA backbone. Located at the interface of the 30S and 50S subunits, it traverses the body of the 30S subunit contacting proteins on the other side and probably holding the rRNA structure together. The combined cluster of proteins S8, S12 and S17 appears to hold together the shoulder and platform of the 30S subunit. This Vibrio cholerae serotype O1 (strain ATCC 39315 / El Tor Inaba N16961) protein is Small ribosomal subunit protein uS12.